The chain runs to 221 residues: Ribosomal RNA small subunit methyltransferase G 3 (221 aa).

Residues glycine 85, phenylalanine 90, 136–137 (IE), and arginine 150 each bind S-adenosyl-L-methionine.

Belongs to the methyltransferase superfamily. RNA methyltransferase RsmG family.

The protein localises to the cytoplasm. The enzyme catalyses guanosine(527) in 16S rRNA + S-adenosyl-L-methionine = N(7)-methylguanosine(527) in 16S rRNA + S-adenosyl-L-homocysteine. Its function is as follows. Specifically methylates the N7 position of guanine in position 527 of 16S rRNA. This Bdellovibrio bacteriovorus (strain ATCC 15356 / DSM 50701 / NCIMB 9529 / HD100) protein is Ribosomal RNA small subunit methyltransferase G 3.